Consider the following 330-residue polypeptide: UDP-glucose 4-epimerase (330 aa).

NAD(+) contacts are provided by residues 11 to 12 (YI), 31 to 36 (DALYTG), 51 to 52 (DI), 73 to 77 (FAAYS), N92, S117, Y141, K145, and F169. S117 and Y141 together coordinate substrate. The Proton acceptor role is filled by Y141. Substrate is bound by residues N170, 189–190 (HL), 206–208 (TIF), R221, and 282–285 (RGGD).

This sequence belongs to the NAD(P)-dependent epimerase/dehydratase family. Homodimer. NAD(+) is required as a cofactor.

The enzyme catalyses UDP-alpha-D-glucose = UDP-alpha-D-galactose. It functions in the pathway carbohydrate metabolism; galactose metabolism. In terms of biological role, involved in the metabolism of galactose. Catalyzes the conversion of UDP-galactose (UDP-Gal) to UDP-glucose (UDP-Glc) through a mechanism involving the transient reduction of NAD. It also could be involved in preparation of carbohydrate residues for incorporation into complex polymers, such as exopolysaccharides. The sequence is that of UDP-glucose 4-epimerase (galE) from Lactobacillus helveticus (Lactobacillus suntoryeus).